We begin with the raw amino-acid sequence, 158 residues long: SsrA-binding protein (158 aa).

Belongs to the SmpB family.

It is found in the cytoplasm. Required for rescue of stalled ribosomes mediated by trans-translation. Binds to transfer-messenger RNA (tmRNA), required for stable association of tmRNA with ribosomes. tmRNA and SmpB together mimic tRNA shape, replacing the anticodon stem-loop with SmpB. tmRNA is encoded by the ssrA gene; the 2 termini fold to resemble tRNA(Ala) and it encodes a 'tag peptide', a short internal open reading frame. During trans-translation Ala-aminoacylated tmRNA acts like a tRNA, entering the A-site of stalled ribosomes, displacing the stalled mRNA. The ribosome then switches to translate the ORF on the tmRNA; the nascent peptide is terminated with the 'tag peptide' encoded by the tmRNA and targeted for degradation. The ribosome is freed to recommence translation, which seems to be the essential function of trans-translation. The chain is SsrA-binding protein from Bartonella henselae (strain ATCC 49882 / DSM 28221 / CCUG 30454 / Houston 1) (Rochalimaea henselae).